Consider the following 1032-residue polypeptide: ATPase MORC2 (1032 aa).

Ala-2 is subject to N-acetylalanine. Residues Asn-39, 87 to 89 (SAK), and 99 to 105 (QYGNGLK) contribute to the ATP site. Asn-39 provides a ligand contact to Mg(2+). The stretch at 282-362 (SRFKTRAEQE…KEAKQRALKE (81 aa)) forms a coiled coil. Position 427 (Lys-427) interacts with ATP. A CW-type zinc finger spans residues 490 to 544 (AMEIPTTIQCDLCLKWRTLPFQLSSVEKDYPDTWVCSMNPDPEQDRCEASEQKQK). Zn(2+) contacts are provided by Cys-499, Cys-502, Cys-525, and Cys-536. Disordered stretches follow at residues 530–563 (DPEQ…KQKQ) and 577–793 (ALQK…RAQK). Composition is skewed to basic and acidic residues over residues 532–543 (EQDRCEASEQKQ) and 550–563 (FRKD…KQKQ). The stretch at 547 to 584 (LGTFRKDMKTQEEKQKQLTEKIRQQQEKLEALQKTTPI) forms a coiled coil. Thr-582 is modified (phosphothreonine). Ser-602 and Ser-615 each carry phosphoserine. A compositionally biased stretch (pro residues) spans 627–638 (SRPPSLPTPRPA). Lys-652 is covalently cross-linked (Glycyl lysine isopeptide (Lys-Gly) (interchain with G-Cter in SUMO2)). Residues 690–704 (PLVQQLSPSLLPNSK) are compositionally biased toward low complexity. Ser-696 is subject to Phosphoserine. Residue Lys-704 forms a Glycyl lysine isopeptide (Lys-Gly) (interchain with G-Cter in SUMO2) linkage. Residue Ser-705 is modified to Phosphoserine. The segment covering 711-720 (SPKVIKTPVV) has biased composition (low complexity). A Glycyl lysine isopeptide (Lys-Gly) (interchain with G-Cter in SUMO2) cross-link involves residue Lys-716. Phosphoserine is present on residues Ser-725 and Ser-730. Phosphothreonine is present on Thr-733. The residue at position 739 (Ser-739) is a Phosphoserine; by PAK1. Positions 741 to 761 (AVSDEEEVEEEAERRKERCKR) form a coiled coil. Phosphoserine is present on Ser-743. Over residues 765 to 774 (VVKEEKKDSN) the composition is skewed to basic and acidic residues. Lys-767 participates in a covalent cross-link: Glycyl lysine isopeptide (Lys-Gly) (interchain with G-Cter in SUMO2). Ser-777 and Ser-779 each carry phosphoserine. Residue Lys-819 forms a Glycyl lysine isopeptide (Lys-Gly) (interchain with G-Cter in SUMO2) linkage. The disordered stretch occupies residues 850–870 (RLMKPPSPEHQSLDTQQEGGE). Residue Lys-932 forms a Glycyl lysine isopeptide (Lys-Gly) (interchain with G-Cter in SUMO2) linkage. The stretch at 966–1016 (QSRADSRAKASEESLRTSERKLRETEEKLQKLRTNIVALLQKVQEDIDINT) forms a coiled coil.

Homodimerizes upon ATP-binding and dissociate upon ATP hydrolysis; homodimerization is required for gene silencing. Interacts with HDAC4. Interacts with ACLY. Interacts with TASOR and MPHOSPH8; the interactions associate MORC2 with the HUSH complex which recruits MORC2 to heterochromatic loci. Post-translationally, phosphorylated by PAK1 at Ser-739 upon DNA damage. Phosphorylation is required for ATPase activity and recruitment to damaged chromatin. Highly expressed in smooth muscle, pancreas and testis.

The protein localises to the nucleus. It is found in the cytoplasm. It localises to the cytosol. Its subcellular location is the chromosome. The protein resides in the nucleus matrix. The catalysed reaction is ATP + H2O = ADP + phosphate + H(+). With respect to regulation, ATPase activity is dependent of phosphorylation by PAK1 and presence of DNA. Its function is as follows. Essential for epigenetic silencing by the HUSH (human silencing hub) complex. Recruited by HUSH to target site in heterochromatin, the ATPase activity and homodimerization are critical for HUSH-mediated silencing. Represses germ cell-related genes and L1 retrotransposons in collaboration with SETDB1 and the HUSH complex, the silencing is dependent of repressive epigenetic modifications, such as H3K9me3 mark. Silencing events often occur within introns of transcriptionally active genes, and lead to the down-regulation of host gene expression. During DNA damage response, regulates chromatin remodeling through ATP hydrolysis. Upon DNA damage, is phosphorylated by PAK1, both colocalize to chromatin and induce H2AX expression. ATPase activity is required and dependent of phosphorylation by PAK1 and presence of DNA. Recruits histone deacetylases, such as HDAC4, to promoter regions, causing local histone H3 deacetylation and transcriptional repression of genes such as CA9. Exhibits a cytosolic function in lipogenesis, adipogenic differentiation, and lipid homeostasis by increasing the activity of ACLY, possibly preventing its dephosphorylation. The polypeptide is ATPase MORC2 (Homo sapiens (Human)).